An 82-amino-acid chain; its full sequence is Protein RALF-like 8 (82 aa).

The N-terminal stretch at 1–28 is a signal peptide; that stretch reads MGMSKSIKVILSLALVVFLALAGTKVEA. 2 disulfide bridges follow: C47–C55 and C67–C73.

Belongs to the plant rapid alkalinization factor (RALF) family. As to expression, expressed in leaves and flowers.

The protein resides in the secreted. Cell signaling peptide that may regulate plant stress, growth, and development. Mediates a rapid alkalinization of extracellular space by mediating a transient increase in the cytoplasmic Ca(2+) concentration leading to a calcium-dependent signaling events through a cell surface receptor and a concomitant activation of some intracellular mitogen-activated protein kinases. The polypeptide is Protein RALF-like 8 (RALFL8) (Arabidopsis thaliana (Mouse-ear cress)).